The following is a 497-amino-acid chain: NAD(P)H-quinone oxidoreductase chain 4, chloroplastic (497 aa).

14 consecutive transmembrane segments (helical) span residues 5–25 (VPWL…IPIL), 36–56 (YTLG…YCHF), 88–108 (LGLV…AWPI), 112–132 (TRLF…LFVS), 135–155 (ILLF…LLCL), 168–188 (FVLY…TMSF), 212–232 (VLIY…FPFH), 243–263 (HYST…YGLI), 275–295 (FLLG…ASLI), 306–326 (IAYS…SFTE), 331–351 (GAIL…FLAG), 387–407 (LALP…GVVT), 418–438 (GITV…LSML), and 463–483 (LFIL…PNLI).

The protein belongs to the complex I subunit 4 family.

Its subcellular location is the plastid. The protein localises to the chloroplast thylakoid membrane. The enzyme catalyses a plastoquinone + NADH + (n+1) H(+)(in) = a plastoquinol + NAD(+) + n H(+)(out). It carries out the reaction a plastoquinone + NADPH + (n+1) H(+)(in) = a plastoquinol + NADP(+) + n H(+)(out). In Adiantum capillus-veneris (Maidenhair fern), this protein is NAD(P)H-quinone oxidoreductase chain 4, chloroplastic.